The following is a 382-amino-acid chain: 3-isopropylmalate dehydrogenase (382 aa).

Residue 91–102 (GPKWGTGSVRPE) participates in NAD(+) binding. Substrate contacts are provided by Arg-109, Arg-119, Arg-148, and Asp-240. Mg(2+) contacts are provided by Asp-240, Asp-265, and Asp-269. Position 304–315 (304–315 (GSAPDLTENKVN)) interacts with NAD(+).

Belongs to the isocitrate and isopropylmalate dehydrogenases family. As to quaternary structure, homodimer. Requires Mg(2+) as cofactor. It depends on Mn(2+) as a cofactor.

Its subcellular location is the cytoplasm. It catalyses the reaction (2R,3S)-3-isopropylmalate + NAD(+) = 4-methyl-2-oxopentanoate + CO2 + NADH. It functions in the pathway amino-acid biosynthesis; L-leucine biosynthesis; L-leucine from 3-methyl-2-oxobutanoate: step 3/4. Functionally, catalyzes the oxidation of 3-carboxy-2-hydroxy-4-methylpentanoate (3-isopropylmalate) to 3-carboxy-4-methyl-2-oxopentanoate. The product decarboxylates to 4-methyl-2 oxopentanoate. In Debaryomyces hansenii (strain ATCC 36239 / CBS 767 / BCRC 21394 / JCM 1990 / NBRC 0083 / IGC 2968) (Yeast), this protein is 3-isopropylmalate dehydrogenase (LEU2).